The primary structure comprises 347 residues: Ketol-acid reductoisomerase (NADP(+)) (347 aa).

The KARI N-terminal Rossmann domain maps to 3 to 182 (TKMFYDKDID…GSGCAGILET (180 aa)). NADP(+) is bound by residues 26–29 (YGAQ), Arg-49, Ser-53, and 83–86 (DELQ). The active site involves His-108. NADP(+) is bound at residue Gly-134. The KARI C-terminal knotted domain occupies 183 to 328 (TFEEETTEDL…KKVRAMMPWI (146 aa)). Positions 191, 195, 227, and 231 each coordinate Mg(2+). Ser-252 is a binding site for substrate.

The protein belongs to the ketol-acid reductoisomerase family. Mg(2+) serves as cofactor.

The catalysed reaction is (2R)-2,3-dihydroxy-3-methylbutanoate + NADP(+) = (2S)-2-acetolactate + NADPH + H(+). It carries out the reaction (2R,3R)-2,3-dihydroxy-3-methylpentanoate + NADP(+) = (S)-2-ethyl-2-hydroxy-3-oxobutanoate + NADPH + H(+). It participates in amino-acid biosynthesis; L-isoleucine biosynthesis; L-isoleucine from 2-oxobutanoate: step 2/4. Its pathway is amino-acid biosynthesis; L-valine biosynthesis; L-valine from pyruvate: step 2/4. Functionally, involved in the biosynthesis of branched-chain amino acids (BCAA). Catalyzes an alkyl-migration followed by a ketol-acid reduction of (S)-2-acetolactate (S2AL) to yield (R)-2,3-dihydroxy-isovalerate. In the isomerase reaction, S2AL is rearranged via a Mg-dependent methyl migration to produce 3-hydroxy-3-methyl-2-ketobutyrate (HMKB). In the reductase reaction, this 2-ketoacid undergoes a metal-dependent reduction by NADPH to yield (R)-2,3-dihydroxy-isovalerate. The chain is Ketol-acid reductoisomerase (NADP(+)) from Leuconostoc mesenteroides subsp. cremoris.